Reading from the N-terminus, the 66-residue chain is MTELSANHGGSAKGTENPFEYDYETVRKGGLIFAGLAFVVGLLILLSKRFRCGGSKKHRQVNEDEL.

The chain crosses the membrane as a helical span at residues 29 to 46; it reads GGLIFAGLAFVVGLLILL.

The protein belongs to the FXYD family. Regulatory subunit of the sodium/potassium-transporting ATPase which is composed of a catalytic alpha subunit, an auxiliary non-catalytic beta subunit and an additional regulatory subunit. In terms of tissue distribution, highest levels expressed in the kidney and spleen. Restricted to the basolateral membrane in renal epithelial cells and varies in its level of expression along the nephron.

The protein resides in the membrane. Functionally, may be involved in forming the receptor site for cardiac glycoside binding or may modulate the transport function of the sodium ATPase. The polypeptide is Sodium/potassium-transporting ATPase subunit gamma (Fxyd2) (Rattus norvegicus (Rat)).